A 196-amino-acid chain; its full sequence is Peptide deformylase (196 aa).

The Fe cation site is built by Cys123 and His166. Glu167 is an active-site residue. Residue His170 participates in Fe cation binding.

This sequence belongs to the polypeptide deformylase family. It depends on Fe(2+) as a cofactor.

The enzyme catalyses N-terminal N-formyl-L-methionyl-[peptide] + H2O = N-terminal L-methionyl-[peptide] + formate. Functionally, removes the formyl group from the N-terminal Met of newly synthesized proteins. Requires at least a dipeptide for an efficient rate of reaction. N-terminal L-methionine is a prerequisite for activity but the enzyme has broad specificity at other positions. The protein is Peptide deformylase of Lactococcus lactis subsp. lactis (strain IL1403) (Streptococcus lactis).